The primary structure comprises 137 residues: 2-iminobutanoate/2-iminopropanoate deaminase (137 aa).

The residue at position 2 (Ser-2) is an N-acetylserine. N6-succinyllysine occurs at positions 13, 60, and 67. Residue Thr-74 is modified to Phosphothreonine. A Phosphoserine modification is found at Ser-136.

This sequence belongs to the RutC family. As to quaternary structure, homotrimer. Interacts with YTHDF2. As to expression, expressed predominantly in liver and kidney. Lower levels in lung and brain.

Its subcellular location is the cytoplasm. It localises to the nucleus. The protein localises to the peroxisome. The protein resides in the mitochondrion. The catalysed reaction is 2-iminobutanoate + H2O = 2-oxobutanoate + NH4(+). It carries out the reaction 2-iminopropanoate + H2O = pyruvate + NH4(+). In terms of biological role, catalyzes the hydrolytic deamination of enamine/imine intermediates that form during the course of normal metabolism. May facilitate the release of ammonia from these potentially toxic reactive metabolites, reducing their impact on cellular components. It may act on enamine/imine intermediates formed by several types of pyridoxal-5'-phosphate-dependent dehydratases including L-threonine dehydratase. Also promotes endoribonucleolytic cleavage of some transcripts by promoting recruitment of the ribonuclease P/MRP complex. Acts by bridging YTHDF2 and the ribonuclease P/MRP complex. RIDA/HRSP12 binds to N6-methyladenosine (m6A)-containing mRNAs containing a 5'-GGUUC-3' motif: cooperative binding of RIDA/HRSP12 and YTHDF2 to such transcripts lead to recruitment of the ribonuclease P/MRP complex and subsequent endoribonucleolytic cleavage. The protein is 2-iminobutanoate/2-iminopropanoate deaminase of Homo sapiens (Human).